A 185-amino-acid chain; its full sequence is Putative manganese efflux pump MntP (185 aa).

6 consecutive transmembrane segments (helical) span residues 3-23, 40-60, 64-84, 102-122, 124-144, and 165-185; these read IFTL…VSLA, LLFV…VSVI, FDAY…LRMI, TFSR…AVGI, LSLA…FVLI, and EIFG…DAMM.

This sequence belongs to the MntP (TC 9.B.29) family.

The protein resides in the cell inner membrane. Its function is as follows. Probably functions as a manganese efflux pump. The polypeptide is Putative manganese efflux pump MntP (Elusimicrobium minutum (strain Pei191)).